A 139-amino-acid chain; its full sequence is MTVHCDIVSAEGEIFSGLVEMVIAHGNLGDIGIAPGHAPLITDLKPGPIRLIKQGGEAEVFYISGGFLEVQPNMVKVLADTVQRAADLDEASAQAAVKAAEKALNEKGADFDYGSATARLAEAAAQLRTVQQIRKKFGG.

This sequence belongs to the ATPase epsilon chain family. In terms of assembly, F-type ATPases have 2 components, CF(1) - the catalytic core - and CF(0) - the membrane proton channel. CF(1) has five subunits: alpha(3), beta(3), gamma(1), delta(1), epsilon(1). CF(0) has three main subunits: a, b and c.

It is found in the cell inner membrane. Its function is as follows. Produces ATP from ADP in the presence of a proton gradient across the membrane. This Pseudomonas syringae pv. tomato (strain ATCC BAA-871 / DC3000) protein is ATP synthase epsilon chain.